Here is a 382-residue protein sequence, read N- to C-terminus: tRNA(Met) cytidine acetate ligase (382 aa).

Residues 9 to 22 (VTEYNPFHNGHAYQ), glycine 103, asparagine 152, and arginine 177 contribute to the ATP site.

It belongs to the TmcAL family.

Its subcellular location is the cytoplasm. It carries out the reaction cytidine(34) in elongator tRNA(Met) + acetate + ATP = N(4)-acetylcytidine(34) in elongator tRNA(Met) + AMP + diphosphate. Catalyzes the formation of N(4)-acetylcytidine (ac(4)C) at the wobble position of elongator tRNA(Met), using acetate and ATP as substrates. First activates an acetate ion to form acetyladenylate (Ac-AMP) and then transfers the acetyl group to tRNA to form ac(4)C34. The chain is tRNA(Met) cytidine acetate ligase from Levilactobacillus brevis (strain ATCC 367 / BCRC 12310 / CIP 105137 / JCM 1170 / LMG 11437 / NCIMB 947 / NCTC 947) (Lactobacillus brevis).